A 292-amino-acid polypeptide reads, in one-letter code: Malonyl-S-ACP:biotin-protein carboxyltransferase MADD (292 aa).

A CoA carboxyltransferase C-terminal domain is found at Met1–Lys281.

The protein localises to the cytoplasm. The catalysed reaction is N(6)-biotinyl-L-lysyl-[protein] + malonyl-[ACP] = N(6)-carboxybiotinyl-L-lysyl-[protein] + acetyl-[ACP]. Gamma subunit of the biotin-dependent malonate decarboxylase multienzyme complex (EC 7.2.4.4). The two subunits MADC and MADD are required for the transfer of the malonate carboxy group from the acyl-carrier protein (ACP) to the prosthetic group of the biotin carrier MADF. Required for the regeneration of ACP. The sequence is that of Malonyl-S-ACP:biotin-protein carboxyltransferase MADD (madD) from Malonomonas rubra.